Here is a 208-residue protein sequence, read N- to C-terminus: ATP-dependent dethiobiotin synthetase BioD (208 aa).

11–16 (EVGKTF) provides a ligand contact to ATP. Thr15 serves as a coordination point for Mg(2+). The active site involves Lys31. Ser35 serves as a coordination point for substrate. Residues Asp42, 95–98 (ETSG), and 155–156 (NQ) contribute to the ATP site. Residues Asp42 and Glu95 each coordinate Mg(2+).

This sequence belongs to the dethiobiotin synthetase family. In terms of assembly, homodimer. Mg(2+) is required as a cofactor.

The protein resides in the cytoplasm. It catalyses the reaction (7R,8S)-7,8-diammoniononanoate + CO2 + ATP = (4R,5S)-dethiobiotin + ADP + phosphate + 3 H(+). It functions in the pathway cofactor biosynthesis; biotin biosynthesis; biotin from 7,8-diaminononanoate: step 1/2. Catalyzes a mechanistically unusual reaction, the ATP-dependent insertion of CO2 between the N7 and N8 nitrogen atoms of 7,8-diaminopelargonic acid (DAPA, also called 7,8-diammoniononanoate) to form a ureido ring. The sequence is that of ATP-dependent dethiobiotin synthetase BioD from Chlamydia felis (strain Fe/C-56) (Chlamydophila felis).